Here is a 331-residue protein sequence, read N- to C-terminus: Holliday junction branch migration complex subunit RuvB (331 aa).

A large ATPase domain (RuvB-L) region spans residues methionine 1–tyrosine 186. ATP-binding positions include isoleucine 25, arginine 26, glycine 67, lysine 70, threonine 71, threonine 72, glutamate 133–phenylalanine 135, arginine 176, tyrosine 186, and arginine 223. Threonine 71 provides a ligand contact to Mg(2+). Residues asparagine 187 to alanine 257 form a small ATPAse domain (RuvB-S) region. The head domain (RuvB-H) stretch occupies residues arginine 260–valine 331. Residues arginine 296, arginine 315, and arginine 320 each contribute to the DNA site.

The protein belongs to the RuvB family. Homohexamer. Forms an RuvA(8)-RuvB(12)-Holliday junction (HJ) complex. HJ DNA is sandwiched between 2 RuvA tetramers; dsDNA enters through RuvA and exits via RuvB. An RuvB hexamer assembles on each DNA strand where it exits the tetramer. Each RuvB hexamer is contacted by two RuvA subunits (via domain III) on 2 adjacent RuvB subunits; this complex drives branch migration. In the full resolvosome a probable DNA-RuvA(4)-RuvB(12)-RuvC(2) complex forms which resolves the HJ.

Its subcellular location is the cytoplasm. The enzyme catalyses ATP + H2O = ADP + phosphate + H(+). The RuvA-RuvB-RuvC complex processes Holliday junction (HJ) DNA during genetic recombination and DNA repair, while the RuvA-RuvB complex plays an important role in the rescue of blocked DNA replication forks via replication fork reversal (RFR). RuvA specifically binds to HJ cruciform DNA, conferring on it an open structure. The RuvB hexamer acts as an ATP-dependent pump, pulling dsDNA into and through the RuvAB complex. RuvB forms 2 homohexamers on either side of HJ DNA bound by 1 or 2 RuvA tetramers; 4 subunits per hexamer contact DNA at a time. Coordinated motions by a converter formed by DNA-disengaged RuvB subunits stimulates ATP hydrolysis and nucleotide exchange. Immobilization of the converter enables RuvB to convert the ATP-contained energy into a lever motion, pulling 2 nucleotides of DNA out of the RuvA tetramer per ATP hydrolyzed, thus driving DNA branch migration. The RuvB motors rotate together with the DNA substrate, which together with the progressing nucleotide cycle form the mechanistic basis for DNA recombination by continuous HJ branch migration. Branch migration allows RuvC to scan DNA until it finds its consensus sequence, where it cleaves and resolves cruciform DNA. The chain is Holliday junction branch migration complex subunit RuvB from Psychrobacter arcticus (strain DSM 17307 / VKM B-2377 / 273-4).